A 780-amino-acid chain; its full sequence is MARLSSRELALERRKALTTSGKKSSVAAGDGANRVRTASDVRPTRTDAAAAVEPTAPAVSAPVKPTVSFTPASPSSSSHVKPQRHPSRDLVLARRDALSRRGKTADTSRDRNRADVARQTQAAAPVAASAEEQKTCGCGGKRAAGKVQLSAPTTSLKPRSDRRSAAPKRRAIENPSRALVLARREAMAKHGKTAGKQPTSAAAVARQANPDLTSRELAQQVRELRTKAGARNKQSAGATRPTGPNRHGAKQAAAADAHWKVGESTTSTGQTVTGTQANRSVKTTGNEASTCRSITGTEYLGAEVFQTFCQQAPEPTTPAKVRVTATSHGNRVTGNEVGRSEKVTGDEPGTCKSVTGTEYISANQSAAYCGSSQVSQRKVGHSLTQQGRPVSGVMVGRSSSVTGDEAGAGRSLTGDQYLGSDPLPDGRPAAKVGQSGTLSGTGVTGTLVGRSSQVTGNEFGSCHRVTGDQYISAEQVNAFCGSKPEPEAAKVGFSITNRNQVVSGTRTGRSERVTGDEPGTCKAVTGTPYAGLENAGQHCGTSAVQAIRERTPVRLGTPSAAMTGIQPGVGGVMTGDEKGACEAVTGTPYVGADQLATACGNEAPAGTDSHGQAPEGAAWTRFSVMSPARAAQQQRDDQGAVTGTSYEQGNRITGPFDLAGGKVTGTEQFRFDNREFQRRQFQPTVAVVSEPAEQPASRVTGEGSSTKITGDDWDRGEHVTGTEGVSARRRNPTRPGPMSATVPHERKRNEENEWPVSRVTGSSGNTEKGSLITVSGGARG.

The span at 1-15 (MARLSSRELALERRK) shows a compositional bias: basic and acidic residues. Disordered stretches follow at residues 1 to 173 (MARL…RAIE), 189 to 212 (KHGKTAGKQPTSAAAVARQANPDL), 226 to 281 (TKAG…NRSV), 330 to 349 (NRVTGNEVGRSEKVTGDEPG), and 382 to 444 (SLTQ…TGVT). An N-repeat 1 repeat occupies 5 to 24 (SSRELALERRKALTTSGKKS). Low complexity predominate over residues 48 to 78 (AAAAVEPTAPAVSAPVKPTVSFTPASPSSSS). One copy of the N-repeat 2 repeat lies at 86-105 (PSRDLVLARRDALSRRGKTA). Basic and acidic residues predominate over residues 86–116 (PSRDLVLARRDALSRRGKTADTSRDRNRADV). Positions 117 to 130 (ARQTQAAAPVAASA) are enriched in low complexity. N-repeat repeat units follow at residues 175 to 194 (PSRALVLARREAMAKHGKTA) and 213 to 235 (TSRELAQQVRELRTKAGARNKQS). M-repeat repeat units lie at residues 260–309 (KVGE…QTFC), 320–369 (KVRV…AAYC), 378–417 (KVGHSLTQQGRPVSGVMVGRSSSVTGDEAGAGRSLTGDQY), 431–480 (KVGQ…NAFC), 490–535 (KVGF…LENA), and 541–599 (TSAV…ATAC). The middle region stretch occupies residues 260 to 608 (KVGESTTSTG…CGNEAPAGTD (349 aa)). The span at 264–276 (STTSTGQTVTGTQ) shows a compositional bias: low complexity. 2 stretches are compositionally biased toward low complexity: residues 387 to 403 (GRPVSGVMVGRSSSVTG) and 432 to 444 (VGQSGTLSGTGVT). The tract at residues 609-749 (SHGQAPEGAA…ATVPHERKRN (141 aa)) is C-terminal domain. C-repeat repeat units lie at residues 623 to 669 (SVMS…TEQF) and 693 to 726 (EQPASRVTGEGSSTKITGDDWDRGEHVTGTEGVS). Disordered stretches follow at residues 631-661 (AQQQRDDQGAVTGTSYEQGNRITGPFDLAGG) and 686-780 (AVVS…GARG). Over residues 641-651 (VTGTSYEQGNR) the composition is skewed to polar residues. Over residues 709–720 (TGDDWDRGEHVT) the composition is skewed to basic and acidic residues. The tract at residues 750–780 (EENEWPVSRVTGSSGNTEKGSLITVSGGARG) is C-terminal peptide. Residues 759–768 (VTGSSGNTEK) are compositionally biased toward polar residues.

The protein belongs to the CsoS2 family. In terms of assembly, interacts via its N-terminal repeats with RuBisCO. Interacts with the major shell protein CsoS1. Post-translationally, unlike H.neapolitanus and predictions for P.marinus strain MIT 9313, this protein is not thought to have ribosomal frameshifting.

Its function is as follows. Required for alpha-carboxysome (Cb) assembly, mediates interaction between RuBisCO and the carboxysome shell. The protein is probably intrinsically disordered. The C-terminal repeats act as the encapsulation signal to target proteins to the Cb; they are necessary and sufficient to target both CsoS2 and foreign proteins to the Cb. The N-terminal repeats of this protein bind simultaneously to both subunits of RuBisCO. Probably also interacts with the major shell proteins (CsoS1); that interaction would increase the local concentration of CsoS2 so that it can condense RuBisCO and full carboxysomes can be formed. In Parasynechococcus marenigrum (strain WH8102), this protein is Carboxysome assembly protein CsoS2.